Reading from the N-terminus, the 238-residue chain is Ribonuclease PH (238 aa).

Phosphate-binding positions include Arg86 and 124-126 (GTR).

It belongs to the RNase PH family. Homohexameric ring arranged as a trimer of dimers.

It catalyses the reaction tRNA(n+1) + phosphate = tRNA(n) + a ribonucleoside 5'-diphosphate. In terms of biological role, phosphorolytic 3'-5' exoribonuclease that plays an important role in tRNA 3'-end maturation. Removes nucleotide residues following the 3'-CCA terminus of tRNAs; can also add nucleotides to the ends of RNA molecules by using nucleoside diphosphates as substrates, but this may not be physiologically important. Probably plays a role in initiation of 16S rRNA degradation (leading to ribosome degradation) during starvation. In Psychrobacter sp. (strain PRwf-1), this protein is Ribonuclease PH.